Reading from the N-terminus, the 452-residue chain is Bifunctional purine biosynthesis protein PurH (452 aa).

Residues 1–115 (MKRILVSLYE…KNWKKVKPAF (115 aa)) enclose the MGS-like domain.

Belongs to the PurH family.

It catalyses the reaction (6R)-10-formyltetrahydrofolate + 5-amino-1-(5-phospho-beta-D-ribosyl)imidazole-4-carboxamide = 5-formamido-1-(5-phospho-D-ribosyl)imidazole-4-carboxamide + (6S)-5,6,7,8-tetrahydrofolate. It carries out the reaction IMP + H2O = 5-formamido-1-(5-phospho-D-ribosyl)imidazole-4-carboxamide. It functions in the pathway purine metabolism; IMP biosynthesis via de novo pathway; 5-formamido-1-(5-phospho-D-ribosyl)imidazole-4-carboxamide from 5-amino-1-(5-phospho-D-ribosyl)imidazole-4-carboxamide (10-formyl THF route): step 1/1. It participates in purine metabolism; IMP biosynthesis via de novo pathway; IMP from 5-formamido-1-(5-phospho-D-ribosyl)imidazole-4-carboxamide: step 1/1. The sequence is that of Bifunctional purine biosynthesis protein PurH from Thermotoga maritima (strain ATCC 43589 / DSM 3109 / JCM 10099 / NBRC 100826 / MSB8).